The chain runs to 249 residues: 5'-nucleotidase SurE (249 aa).

The a divalent metal cation site is built by Asp-8, Asp-9, Ser-39, and Asn-96.

This sequence belongs to the SurE nucleotidase family. Requires a divalent metal cation as cofactor.

The protein localises to the cytoplasm. The catalysed reaction is a ribonucleoside 5'-phosphate + H2O = a ribonucleoside + phosphate. Its function is as follows. Nucleotidase that shows phosphatase activity on nucleoside 5'-monophosphates. This is 5'-nucleotidase SurE from Clostridium tetani (strain Massachusetts / E88).